Here is a 340-residue protein sequence, read N- to C-terminus: Nicotinate-nucleotide--dimethylbenzimidazole phosphoribosyltransferase (340 aa).

Residue E305 is the Proton acceptor of the active site.

Belongs to the CobT family.

The enzyme catalyses 5,6-dimethylbenzimidazole + nicotinate beta-D-ribonucleotide = alpha-ribazole 5'-phosphate + nicotinate + H(+). It participates in nucleoside biosynthesis; alpha-ribazole biosynthesis; alpha-ribazole from 5,6-dimethylbenzimidazole: step 1/2. Catalyzes the synthesis of alpha-ribazole-5'-phosphate from nicotinate mononucleotide (NAMN) and 5,6-dimethylbenzimidazole (DMB). The protein is Nicotinate-nucleotide--dimethylbenzimidazole phosphoribosyltransferase of Allorhizobium ampelinum (strain ATCC BAA-846 / DSM 112012 / S4) (Agrobacterium vitis (strain S4)).